The chain runs to 79 residues: Translational regulator CsrA (79 aa).

Belongs to the CsrA/RsmA family. Homodimer; the beta-strands of each monomer intercalate to form a hydrophobic core, while the alpha-helices form wings that extend away from the core.

It localises to the cytoplasm. Functionally, a translational regulator that binds mRNA to regulate translation initiation and/or mRNA stability. Usually binds in the 5'-UTR at or near the Shine-Dalgarno sequence preventing ribosome-binding, thus repressing translation. Its main target seems to be the major flagellin gene, while its function is anatagonized by FliW. In Maridesulfovibrio salexigens (strain ATCC 14822 / DSM 2638 / NCIMB 8403 / VKM B-1763) (Desulfovibrio salexigens), this protein is Translational regulator CsrA.